Here is a 361-residue protein sequence, read N- to C-terminus: 5-exo-hydroxycamphor dehydrogenase (361 aa).

Positions 40, 62, 98, 101, 104, and 170 each coordinate Zn(2+).

This sequence belongs to the zinc-containing alcohol dehydrogenase family. Zn(2+) is required as a cofactor.

It catalyses the reaction (1R,4R,5R)-5-hydroxycamphor + NAD(+) = (1R,4R)-bornane-2,5-dione + NADH + H(+). Its pathway is terpene metabolism; (R)-camphor degradation. The chain is 5-exo-hydroxycamphor dehydrogenase (camD) from Pseudomonas putida (Arthrobacter siderocapsulatus).